Reading from the N-terminus, the 107-residue chain is Thioredoxin (107 aa).

Positions 2 to 107 constitute a Thioredoxin domain; sequence AGVLKNVTDD…ALLRPGPVPR (106 aa). Cysteine 33 and cysteine 36 are disulfide-bonded.

Belongs to the thioredoxin family.

Its function is as follows. Component of the thioredoxin-thioredoxin reductase system. Participates in various redox reactions through the reversible oxidation of its active center dithiol to a disulfide and catalyzes dithiol-disulfide exchange reactions. The polypeptide is Thioredoxin (trxA) (Streptomyces clavuligerus).